Here is a 335-residue protein sequence, read N- to C-terminus: Biotin synthase (335 aa).

The 229-residue stretch at 46-274 (YDIQLASLFS…ESKIRLSAGR (229 aa)) folds into the Radical SAM core domain. The [4Fe-4S] cluster site is built by cysteine 61, cysteine 65, and cysteine 68. [2Fe-2S] cluster-binding residues include cysteine 105, cysteine 137, cysteine 197, and arginine 269.

Belongs to the radical SAM superfamily. Biotin synthase family. Homodimer. [4Fe-4S] cluster is required as a cofactor. It depends on [2Fe-2S] cluster as a cofactor.

The catalysed reaction is (4R,5S)-dethiobiotin + (sulfur carrier)-SH + 2 reduced [2Fe-2S]-[ferredoxin] + 2 S-adenosyl-L-methionine = (sulfur carrier)-H + biotin + 2 5'-deoxyadenosine + 2 L-methionine + 2 oxidized [2Fe-2S]-[ferredoxin]. Its pathway is cofactor biosynthesis; biotin biosynthesis; biotin from 7,8-diaminononanoate: step 2/2. Catalyzes the conversion of dethiobiotin (DTB) to biotin by the insertion of a sulfur atom into dethiobiotin via a radical-based mechanism. This Prochlorococcus marinus (strain MIT 9301) protein is Biotin synthase.